The following is a 439-amino-acid chain: Ribosomal protein uS12 methylthiotransferase RimO (439 aa).

An MTTase N-terminal domain is found at 7-119 (KQLCLISLGC…IDIMIAKKQN (113 aa)). Cys16, Cys50, Cys82, Cys151, Cys155, and Cys158 together coordinate [4Fe-4S] cluster. Residues 137 to 368 (TGSSVHAYVK…ALKHQNHSFK (232 aa)) enclose the Radical SAM core domain.

Belongs to the methylthiotransferase family. RimO subfamily. Requires [4Fe-4S] cluster as cofactor.

Its subcellular location is the cytoplasm. The catalysed reaction is L-aspartate(89)-[ribosomal protein uS12]-hydrogen + (sulfur carrier)-SH + AH2 + 2 S-adenosyl-L-methionine = 3-methylsulfanyl-L-aspartate(89)-[ribosomal protein uS12]-hydrogen + (sulfur carrier)-H + 5'-deoxyadenosine + L-methionine + A + S-adenosyl-L-homocysteine + 2 H(+). Catalyzes the methylthiolation of an aspartic acid residue of ribosomal protein uS12. In Helicobacter pylori (strain ATCC 700392 / 26695) (Campylobacter pylori), this protein is Ribosomal protein uS12 methylthiotransferase RimO.